The following is a 530-amino-acid chain: Autoinducer-2 kinase (530 aa).

Belongs to the FGGY kinase family.

It localises to the cytoplasm. The enzyme catalyses (S)-4,5-dihydroxypentane-2,3-dione + ATP = (2S)-2-hydroxy-3,4-dioxopentyl phosphate + ADP + H(+). Its function is as follows. Catalyzes the phosphorylation of autoinducer-2 (AI-2) to phospho-AI-2, which subsequently inactivates the transcriptional regulator LsrR and leads to the transcription of the lsr operon. Phosphorylates the ring-open form of (S)-4,5-dihydroxypentane-2,3-dione (DPD), which is the precursor to all AI-2 signaling molecules, at the C5 position. This chain is Autoinducer-2 kinase, found in Escherichia coli (strain SMS-3-5 / SECEC).